A 345-amino-acid polypeptide reads, in one-letter code: Anthranilate phosphoribosyltransferase 1 (345 aa).

5-phospho-alpha-D-ribose 1-diphosphate is bound by residues Gly-86, Gly-89–Asp-90, Thr-94, Asn-96–Thr-99, Lys-114–Ser-122, and Ser-126. Gly-86 provides a ligand contact to anthranilate. A Mg(2+)-binding site is contributed by Ser-98. Residue Arg-172 coordinates anthranilate. Residues Asp-231 and Glu-232 each coordinate Mg(2+).

It belongs to the anthranilate phosphoribosyltransferase family. In terms of assembly, homodimer. Requires Mg(2+) as cofactor.

The enzyme catalyses N-(5-phospho-beta-D-ribosyl)anthranilate + diphosphate = 5-phospho-alpha-D-ribose 1-diphosphate + anthranilate. It functions in the pathway amino-acid biosynthesis; L-tryptophan biosynthesis; L-tryptophan from chorismate: step 2/5. Catalyzes the transfer of the phosphoribosyl group of 5-phosphorylribose-1-pyrophosphate (PRPP) to anthranilate to yield N-(5'-phosphoribosyl)-anthranilate (PRA). This is Anthranilate phosphoribosyltransferase 1 from Ralstonia nicotianae (strain ATCC BAA-1114 / GMI1000) (Ralstonia solanacearum).